A 237-amino-acid chain; its full sequence is tRNA (guanine-N(1)-)-methyltransferase (237 aa).

Residues glycine 113 and valine 133–valine 138 each bind S-adenosyl-L-methionine.

It belongs to the RNA methyltransferase TrmD family. As to quaternary structure, homodimer.

Its subcellular location is the cytoplasm. The enzyme catalyses guanosine(37) in tRNA + S-adenosyl-L-methionine = N(1)-methylguanosine(37) in tRNA + S-adenosyl-L-homocysteine + H(+). Its function is as follows. Specifically methylates guanosine-37 in various tRNAs. This is tRNA (guanine-N(1)-)-methyltransferase from Hydrogenovibrio crunogenus (strain DSM 25203 / XCL-2) (Thiomicrospira crunogena).